Here is a 475-residue protein sequence, read N- to C-terminus: Secreted triacylglycerol lipase LIP5 (475 aa).

A signal peptide spans 1-19; sequence MYPCTLLMVLLCLAIMTHG. A disulfide bond links Cys-129 and Cys-300. Ser-213 functions as the Nucleophile in the catalytic mechanism. 2 N-linked (GlcNAc...) asparagine glycosylation sites follow: Asn-246 and Asn-312. Asp-360 is a catalytic residue. Asn-369 is a glycosylation site (N-linked (GlcNAc...) asparagine). His-394 is a catalytic residue. Asn-471 is a glycosylation site (N-linked (GlcNAc...) asparagine).

This sequence belongs to the AB hydrolase superfamily. Lipase family. Class Lip subfamily.

The enzyme catalyses a triacylglycerol + H2O = a diacylglycerol + a fatty acid + H(+). It catalyses the reaction a monoacylglycerol + H2O = glycerol + a fatty acid + H(+). The catalysed reaction is a diacylglycerol + H2O = a monoacylglycerol + a fatty acid + H(+). Its function is as follows. Secreted lipase involved in Dandruff and seborrheic dermatitis (D/SD) probably via lipase-mediated breakdown of sebaceous lipids and release of irritating free fatty acids. Has triacylglycerol lipase activity and is able to hydrolyze triolein. Mostly converts monoolein to di- and triolein, while free fatty acids are only produced in low amounts. The chain is Secreted triacylglycerol lipase LIP5 from Malassezia globosa (strain ATCC MYA-4612 / CBS 7966) (Dandruff-associated fungus).